The chain runs to 652 residues: DNA mismatch repair protein MutL (652 aa).

It belongs to the DNA mismatch repair MutL/HexB family.

Its function is as follows. This protein is involved in the repair of mismatches in DNA. It is required for dam-dependent methyl-directed DNA mismatch repair. May act as a 'molecular matchmaker', a protein that promotes the formation of a stable complex between two or more DNA-binding proteins in an ATP-dependent manner without itself being part of a final effector complex. The protein is DNA mismatch repair protein MutL of Neorickettsia sennetsu (strain ATCC VR-367 / Miyayama) (Ehrlichia sennetsu).